Reading from the N-terminus, the 517-residue chain is UDP-N-acetylmuramyl-tripeptide synthetase (517 aa).

Position 38 (Ser-38) interacts with UDP-N-acetyl-alpha-D-muramoyl-L-alanyl-D-glutamate. Residue 116-122 (GTKGKTT) coordinates ATP. UDP-N-acetyl-alpha-D-muramoyl-L-alanyl-D-glutamate is bound by residues Asn-160, 162–163 (TT), Ser-189, and Arg-197. Lys-231 carries the N6-carboxylysine modification.

The protein belongs to the MurCDEF family. MurE subfamily. In terms of processing, carboxylation is probably crucial for Mg(2+) binding and, consequently, for the gamma-phosphate positioning of ATP.

The protein resides in the cytoplasm. It participates in cell wall biogenesis; peptidoglycan biosynthesis. Catalyzes the addition of an amino acid to the nucleotide precursor UDP-N-acetylmuramoyl-L-alanyl-D-glutamate (UMAG) in the biosynthesis of bacterial cell-wall peptidoglycan. This chain is UDP-N-acetylmuramyl-tripeptide synthetase, found in Lacticaseibacillus paracasei (strain ATCC 334 / BCRC 17002 / CCUG 31169 / CIP 107868 / KCTC 3260 / NRRL B-441) (Lactobacillus paracasei).